The primary structure comprises 387 residues: EARP-interacting protein homolog (387 aa).

WD repeat units follow at residues 132 to 172 (TAHG…TKSV), 182 to 222 (KGQL…QIYC), 226 to 266 (AHGQ…EPVK), and 270 to 310 (EHSH…SEPF). The interval 311 to 339 (GHLVDDEDLSDQEDNPQEEKTKEPLQDSI) is disordered. Residues 315–326 (DDEDLSDQEDNP) show a composition bias toward acidic residues. A WD 5 repeat occupies 345-385 (EHEDSVYAVEWSSADPWLFASLSYDGRLVINRVPRALKYNI).

The protein belongs to the WD repeat EIPR1 family.

It localises to the golgi apparatus. Its subcellular location is the trans-Golgi network. Its function is as follows. May act as a component of endosomal retrieval machinery that is involved in protein transport from early endosomes to either recycling endosomes or the trans-Golgi network. The protein is EARP-interacting protein homolog of Xenopus laevis (African clawed frog).